The primary structure comprises 404 residues: Acetate kinase (404 aa).

Asn7 provides a ligand contact to Mg(2+). An ATP-binding site is contributed by Lys14. Arg91 is a binding site for substrate. Asp148 acts as the Proton donor/acceptor in catalysis. ATP is bound by residues 208 to 212 (HLGNG) and 283 to 285 (DLR). Glu388 is a binding site for Mg(2+).

It belongs to the acetokinase family. Homodimer. Mg(2+) is required as a cofactor. Requires Mn(2+) as cofactor.

It localises to the cytoplasm. It catalyses the reaction acetate + ATP = acetyl phosphate + ADP. It participates in metabolic intermediate biosynthesis; acetyl-CoA biosynthesis; acetyl-CoA from acetate: step 1/2. Its function is as follows. Catalyzes the formation of acetyl phosphate from acetate and ATP. Can also catalyze the reverse reaction. This chain is Acetate kinase, found in Borrelia turicatae (strain 91E135).